Reading from the N-terminus, the 132-residue chain is Small ribosomal subunit protein uS8 (132 aa).

It belongs to the universal ribosomal protein uS8 family. As to quaternary structure, part of the 30S ribosomal subunit. Contacts proteins S5 and S12.

Its function is as follows. One of the primary rRNA binding proteins, it binds directly to 16S rRNA central domain where it helps coordinate assembly of the platform of the 30S subunit. This chain is Small ribosomal subunit protein uS8, found in Paenarthrobacter aurescens (strain TC1).